Consider the following 137-residue polypeptide: NADH-quinone oxidoreductase subunit A (137 aa).

Helical transmembrane passes span 12 to 32 (WGFA…LGLS), 66 to 86 (FYLV…LFAW), and 95 to 115 (WTGF…LVYL).

This sequence belongs to the complex I subunit 3 family. As to quaternary structure, NDH-1 is composed of 13 different subunits. Subunits NuoA, H, J, K, L, M, N constitute the membrane sector of the complex.

Its subcellular location is the cell inner membrane. The enzyme catalyses a quinone + NADH + 5 H(+)(in) = a quinol + NAD(+) + 4 H(+)(out). NDH-1 shuttles electrons from NADH, via FMN and iron-sulfur (Fe-S) centers, to quinones in the respiratory chain. The immediate electron acceptor for the enzyme in this species is believed to be ubiquinone. Couples the redox reaction to proton translocation (for every two electrons transferred, four hydrogen ions are translocated across the cytoplasmic membrane), and thus conserves the redox energy in a proton gradient. In Pseudomonas putida (strain ATCC 700007 / DSM 6899 / JCM 31910 / BCRC 17059 / LMG 24140 / F1), this protein is NADH-quinone oxidoreductase subunit A.